Here is a 302-residue protein sequence, read N- to C-terminus: Tyrosine recombinase XerC (302 aa).

In terms of domain architecture, Core-binding (CB) spans 6–90 (DLEVTCLQDY…AIKQWGEFLL (85 aa)). Positions 111-290 (PLPKNMDVDS…DFQHLAKVYD (180 aa)) constitute a Tyr recombinase domain. Catalysis depends on residues R150, K174, H242, R245, and H268. Y277 acts as the O-(3'-phospho-DNA)-tyrosine intermediate in catalysis.

Belongs to the 'phage' integrase family. XerC subfamily. As to quaternary structure, forms a cyclic heterotetrameric complex composed of two molecules of XerC and two molecules of XerD.

It localises to the cytoplasm. Site-specific tyrosine recombinase, which acts by catalyzing the cutting and rejoining of the recombining DNA molecules. The XerC-XerD complex is essential to convert dimers of the bacterial chromosome into monomers to permit their segregation at cell division. It also contributes to the segregational stability of plasmids. This chain is Tyrosine recombinase XerC, found in Shewanella putrefaciens (strain CN-32 / ATCC BAA-453).